We begin with the raw amino-acid sequence, 213 residues long: Dimethyl sulfoxide reductase transcriptional activator (213 aa).

Residues 155-206 (LTAKQREAALIAVHHGYYETPRRTELATLAEALGISKSALSQRLNAVEAKLA) enclose the HTH bat-type domain.

Involved in activating dmsEABCD gene expression related to dimethyl sulfoxide (DMSO) reductase. Required for anaerobic respiration on dimethyl sulfoxide (DMSO). The sequence is that of Dimethyl sulfoxide reductase transcriptional activator from Haloferax volcanii (strain ATCC 29605 / DSM 3757 / JCM 8879 / NBRC 14742 / NCIMB 2012 / VKM B-1768 / DS2) (Halobacterium volcanii).